Reading from the N-terminus, the 906-residue chain is Protein kintoun (906 aa).

Ser376 carries the post-translational modification Phosphoserine. 2 disordered regions span residues 614-691 (QQQK…RKQR) and 793-906 (RKKN…DEDM). The span at 618-631 (KLNKKQRKRNKKQR) shows a compositional bias: basic residues. Positions 639-655 (EELKAAQEELQLQHEKQ) are enriched in basic and acidic residues. Over residues 793 to 808 (RKKNQKRRDCKLRAQQ) the composition is skewed to basic residues. Position 812 is a phosphoserine (Ser812). Positions 837-850 (ANAQYFKQPNNNNG) are enriched in polar residues. Basic and acidic residues-rich tracts occupy residues 851 to 865 (HDQDKNKKLSMHDSG) and 875 to 887 (NNEEETKRNEADA). Acidic residues predominate over residues 894–906 (EMDDDDEDEDEDM).

It belongs to the PIH1 family. Kintoun subfamily. As to quaternary structure, interacts with Pp1alpha-96A, Pp1-87B, Pp1-13C and flw.

It localises to the cytoplasm. Its function is as follows. Required for cytoplasmic pre-assembly of axonemal dyneins, thereby playing a central role in motility in cilia and flagella. Involved in pre-assembly of dynein arm complexes in the cytoplasm before intraflagellar transport loads them for the ciliary compartment. The chain is Protein kintoun from Drosophila virilis (Fruit fly).